The primary structure comprises 193 residues: Phosphoheptose isomerase (193 aa).

In terms of domain architecture, SIS spans leucine 37 to alanine 193. Asparagine 52–glycine 54 is a binding site for substrate. Zn(2+) contacts are provided by histidine 61 and glutamate 65. Residues glutamate 65, asparagine 93–aspartate 94, serine 119–serine 121, serine 124, and glutamine 172 contribute to the substrate site. Zn(2+)-binding residues include glutamine 172 and histidine 180.

The protein belongs to the SIS family. GmhA subfamily. Homotetramer. Requires Zn(2+) as cofactor.

It is found in the cytoplasm. The catalysed reaction is 2 D-sedoheptulose 7-phosphate = D-glycero-alpha-D-manno-heptose 7-phosphate + D-glycero-beta-D-manno-heptose 7-phosphate. It functions in the pathway carbohydrate biosynthesis; D-glycero-D-manno-heptose 7-phosphate biosynthesis; D-glycero-alpha-D-manno-heptose 7-phosphate and D-glycero-beta-D-manno-heptose 7-phosphate from sedoheptulose 7-phosphate: step 1/1. Catalyzes the isomerization of sedoheptulose 7-phosphate in D-glycero-D-manno-heptose 7-phosphate. The polypeptide is Phosphoheptose isomerase (Yersinia pseudotuberculosis serotype O:1b (strain IP 31758)).